The sequence spans 166 residues: Ribosome maturation factor RimM (166 aa).

The PRC barrel domain maps to 94-166; sequence EGEYYLGKLI…IELKVLDLLK (73 aa).

Belongs to the RimM family. In terms of assembly, binds ribosomal protein uS19.

Its subcellular location is the cytoplasm. An accessory protein needed during the final step in the assembly of 30S ribosomal subunit, possibly for assembly of the head region. Essential for efficient processing of 16S rRNA. May be needed both before and after RbfA during the maturation of 16S rRNA. It has affinity for free ribosomal 30S subunits but not for 70S ribosomes. The polypeptide is Ribosome maturation factor RimM (Borreliella burgdorferi (strain ATCC 35210 / DSM 4680 / CIP 102532 / B31) (Borrelia burgdorferi)).